Reading from the N-terminus, the 166-residue chain is NADH-quinone oxidoreductase subunit B (166 aa).

C44, C45, C110, and C140 together coordinate [4Fe-4S] cluster.

The protein belongs to the complex I 20 kDa subunit family. As to quaternary structure, NDH-1 is composed of 14 different subunits. Subunits NuoB, C, D, E, F, and G constitute the peripheral sector of the complex. Requires [4Fe-4S] cluster as cofactor.

It localises to the cell membrane. The enzyme catalyses a quinone + NADH + 5 H(+)(in) = a quinol + NAD(+) + 4 H(+)(out). Functionally, NDH-1 shuttles electrons from NADH, via FMN and iron-sulfur (Fe-S) centers, to quinones in the respiratory chain. The immediate electron acceptor for the enzyme in this species is believed to be a menaquinone. Couples the redox reaction to proton translocation (for every two electrons transferred, four hydrogen ions are translocated across the cytoplasmic membrane), and thus conserves the redox energy in a proton gradient. The chain is NADH-quinone oxidoreductase subunit B from Carboxydothermus hydrogenoformans (strain ATCC BAA-161 / DSM 6008 / Z-2901).